The sequence spans 432 residues: Putative D-alanyl-D-alanine carboxypeptidase (432 aa).

Residues 7–25 traverse the membrane as a helical; Signal-anchor segment; sequence ATVLLTFSLSAFAVEYPVL.

It belongs to the peptidase S12 family. YfeW subfamily.

The protein resides in the cell inner membrane. The enzyme catalyses Preferential cleavage: (Ac)2-L-Lys-D-Ala-|-D-Ala. Also transpeptidation of peptidyl-alanyl moieties that are N-acyl substituents of D-alanine.. The sequence is that of Putative D-alanyl-D-alanine carboxypeptidase from Salmonella agona (strain SL483).